Here is a 147-residue protein sequence, read N- to C-terminus: Hemoglobin subunit delta (147 aa).

The Globin domain maps to 3–147; it reads HLTPEEKAAV…VATALAHKYH (145 aa). The heme b site is built by His64 and His93.

It belongs to the globin family. Heterotetramer of two delta chains and two alpha chains. In terms of tissue distribution, red blood cells.

The sequence is that of Hemoglobin subunit delta (HBD) from Ateles geoffroyi (Black-handed spider monkey).